The primary structure comprises 491 residues: Ketol-acid reductoisomerase (NADP(+)) (491 aa).

The region spanning 15-208 (AQLGKCRFMA…GGHRAGVLES (194 aa)) is the KARI N-terminal Rossmann domain. NADP(+)-binding positions include 45–48 (CGAQ), Arg-68, Arg-76, Ser-78, and 108–110 (DKQ). His-132 is a catalytic residue. Gly-158 contacts NADP(+). KARI C-terminal knotted domains are found at residues 209 to 344 (SFVA…TAPQ) and 345 to 484 (YEGK…MTDM). Mg(2+) contacts are provided by Asp-217, Glu-221, Glu-389, and Glu-393. Residue Ser-414 participates in substrate binding.

This sequence belongs to the ketol-acid reductoisomerase family. Requires Mg(2+) as cofactor.

The enzyme catalyses (2R)-2,3-dihydroxy-3-methylbutanoate + NADP(+) = (2S)-2-acetolactate + NADPH + H(+). The catalysed reaction is (2R,3R)-2,3-dihydroxy-3-methylpentanoate + NADP(+) = (S)-2-ethyl-2-hydroxy-3-oxobutanoate + NADPH + H(+). Its pathway is amino-acid biosynthesis; L-isoleucine biosynthesis; L-isoleucine from 2-oxobutanoate: step 2/4. The protein operates within amino-acid biosynthesis; L-valine biosynthesis; L-valine from pyruvate: step 2/4. In terms of biological role, involved in the biosynthesis of branched-chain amino acids (BCAA). Catalyzes an alkyl-migration followed by a ketol-acid reduction of (S)-2-acetolactate (S2AL) to yield (R)-2,3-dihydroxy-isovalerate. In the isomerase reaction, S2AL is rearranged via a Mg-dependent methyl migration to produce 3-hydroxy-3-methyl-2-ketobutyrate (HMKB). In the reductase reaction, this 2-ketoacid undergoes a metal-dependent reduction by NADPH to yield (R)-2,3-dihydroxy-isovalerate. This chain is Ketol-acid reductoisomerase (NADP(+)), found in Klebsiella pneumoniae subsp. pneumoniae (strain ATCC 700721 / MGH 78578).